A 311-amino-acid polypeptide reads, in one-letter code: Aspartate carbamoyltransferase catalytic subunit (311 aa).

Residues Arg-55 and Thr-56 each coordinate carbamoyl phosphate. Lys-85 contributes to the L-aspartate binding site. Carbamoyl phosphate-binding residues include Arg-106, His-135, and Gln-138. Arg-168 and Arg-230 together coordinate L-aspartate. The carbamoyl phosphate site is built by Leu-268 and Pro-269.

It belongs to the aspartate/ornithine carbamoyltransferase superfamily. ATCase family. In terms of assembly, heterododecamer (2C3:3R2) of six catalytic PyrB chains organized as two trimers (C3), and six regulatory PyrI chains organized as three dimers (R2).

The catalysed reaction is carbamoyl phosphate + L-aspartate = N-carbamoyl-L-aspartate + phosphate + H(+). The protein operates within pyrimidine metabolism; UMP biosynthesis via de novo pathway; (S)-dihydroorotate from bicarbonate: step 2/3. Functionally, catalyzes the condensation of carbamoyl phosphate and aspartate to form carbamoyl aspartate and inorganic phosphate, the committed step in the de novo pyrimidine nucleotide biosynthesis pathway. This Salmonella arizonae (strain ATCC BAA-731 / CDC346-86 / RSK2980) protein is Aspartate carbamoyltransferase catalytic subunit.